The sequence spans 467 residues: Glutamate--tRNA ligase (467 aa).

A 'HIGH' region motif is present at residues 9-19; the sequence is PSPTGYLHIGG. The 'KMSKS' region signature appears at 237–241; it reads KLSKR. Lys240 lines the ATP pocket.

Belongs to the class-I aminoacyl-tRNA synthetase family. Glutamate--tRNA ligase type 1 subfamily. Monomer.

It localises to the cytoplasm. The catalysed reaction is tRNA(Glu) + L-glutamate + ATP = L-glutamyl-tRNA(Glu) + AMP + diphosphate. In terms of biological role, catalyzes the attachment of glutamate to tRNA(Glu) in a two-step reaction: glutamate is first activated by ATP to form Glu-AMP and then transferred to the acceptor end of tRNA(Glu). The chain is Glutamate--tRNA ligase from Xanthomonas axonopodis pv. citri (strain 306).